The following is a 236-amino-acid chain: MKQMDAHQIISFIQNSKKATPVKVYLKGDLEKITFPVDVKTFITGNAGTIFGEWAIVEPLLEANKANIEDYVIENDRRNSAIPLLDMKNINARIEPGAVIRDQVTIGDNAVIMMGASINIGAVIGDGTMIDMNVVLGGRATVGKNCHIGAGSVLAGVVEPPSAQPVIVEDNVVIGANVVVLEGVRIGEGAVVAAGAIVTKDVAPGTVVAGIPARELKKLDAKTASKTEIMQELRQL.

It belongs to the transferase hexapeptide repeat family. DapH subfamily.

The enzyme catalyses (S)-2,3,4,5-tetrahydrodipicolinate + acetyl-CoA + H2O = L-2-acetamido-6-oxoheptanedioate + CoA. It functions in the pathway amino-acid biosynthesis; L-lysine biosynthesis via DAP pathway; LL-2,6-diaminopimelate from (S)-tetrahydrodipicolinate (acetylase route): step 1/3. In terms of biological role, catalyzes the transfer of an acetyl group from acetyl-CoA to tetrahydrodipicolinate. The sequence is that of 2,3,4,5-tetrahydropyridine-2,6-dicarboxylate N-acetyltransferase from Listeria ivanovii.